Reading from the N-terminus, the 306-residue chain is Nuclear egress protein 1 (306 aa).

Residues 1 to 49 (MYDTDPHRRGSRPGPYHGKERRRSRSSAAGGTLGVVRRASRKSLPPHAR) form a disordered region. Residues 106–225 (CLTLSGMGYY…YVIFPGTSAH (120 aa)) form a CCCH-type zinc finger.

The protein belongs to the herpesviridae NEC1 protein family. As to quaternary structure, forms a heterohexameric complex with NEC2. Interacts with capsid vertex specific component 2/CVC2; this interaction directs the capsid to the host inner nuclear membrane to initiate budding. Phosphorylated at serine residues in the N-terminus. This phosphorylation regulates the localization within the inner nuclear membrane.

The protein resides in the host nucleus inner membrane. Its function is as follows. Plays an essential role in virion nuclear egress, the first step of virion release from infected cell. Within the host nucleus, NEC1 interacts with the newly formed capsid through the vertexes and directs it to the inner nuclear membrane by associating with NEC2. Induces the budding of the capsid at the inner nuclear membrane as well as its envelopment into the perinuclear space. There, the NEC1/NEC2 complex promotes the fusion of the enveloped capsid with the outer nuclear membrane and the subsequent release of the viral capsid into the cytoplasm where it will reach the secondary budding sites in the host Golgi or trans-Golgi network. The polypeptide is Nuclear egress protein 1 (Human herpesvirus 1 (strain 17) (HHV-1)).